The primary structure comprises 115 residues: MISKPDKNKLRQKRHTRVRGKISGTTETPRLNVFRSNTNIYAQVIDDVTGTTLASASSLKLTGTKTEQAAEVGKLVAEAAKAKGVEEVVFDRGGYLYHGRVAALATAAREAGLKF.

The tract at residues 1 to 24 is disordered; that stretch reads MISKPDKNKLRQKRHTRVRGKISG. Positions 10 to 20 are enriched in basic residues; that stretch reads LRQKRHTRVRG.

The protein belongs to the universal ribosomal protein uL18 family. As to quaternary structure, part of the 50S ribosomal subunit; part of the 5S rRNA/L5/L18/L25 subcomplex. Contacts the 5S and 23S rRNAs.

In terms of biological role, this is one of the proteins that bind and probably mediate the attachment of the 5S RNA into the large ribosomal subunit, where it forms part of the central protuberance. The polypeptide is Large ribosomal subunit protein uL18 (Lactococcus lactis subsp. cremoris (strain MG1363)).